We begin with the raw amino-acid sequence, 967 residues long: uncharacterized protein (967 aa).

Disordered stretches follow at residues 1-23 (MQNA…FHDR) and 41-72 (FTMH…DPRT). A compositionally biased stretch (basic and acidic residues) spans 14-23 (KGRDVNFHDR). A compositionally biased stretch (polar residues) spans 60–72 (RLSNYSSAVDPRT). The residue at position 86 (Ser-86) is a Phosphoserine. 5 disordered regions span residues 135–259 (AVSE…QHLP), 271–296 (SVSR…SPPE), 380–399 (DSTT…APHK), 437–464 (HSYG…FVAD), and 499–544 (GTRF…KSLS). Polar residues predominate over residues 162–187 (ESSTSNNLETGNSTNTALHNVSSPLE). The segment covering 205–218 (HDLDEVISEKDTSL) has biased composition (basic and acidic residues). The segment covering 221–234 (RSSRGRSSAPKRRK) has biased composition (basic residues). Positions 278-294 (SPASTPRSSVSSVSSSP) are enriched in low complexity. Over residues 382-394 (TTEYVNTESSSKT) the composition is skewed to polar residues. Basic residues predominate over residues 499–508 (GTRFHSRSSH). At Ser-585 the chain carries Phosphoserine. Disordered regions lie at residues 594–665 (ESNE…SVND) and 681–708 (DHRI…ESQH). A compositionally biased stretch (basic and acidic residues) spans 608-622 (YDSRESTGHTIKELR). A compositionally biased stretch (low complexity) spans 686–704 (ASDNQNNNNNDANALAENS). Residue 728 to 736 (PCVLDVKMG) participates in substrate binding.

The protein belongs to the inositol phosphokinase (IPK) family.

It is found in the cytoplasm. This is an uncharacterized protein from Schizosaccharomyces pombe (strain 972 / ATCC 24843) (Fission yeast).